The chain runs to 299 residues: Probable lipid kinase YegS (299 aa).

Residues 2 to 133 (ANFPASLLIL…IDMARVNDKT (132 aa)) enclose the DAGKc domain. ATP is bound by residues threonine 40, 66–72 (GDGTINE), and threonine 95. Mg(2+)-binding residues include leucine 215, aspartate 218, and leucine 220. The active-site Proton acceptor is glutamate 271.

This sequence belongs to the diacylglycerol/lipid kinase family. YegS lipid kinase subfamily. Mg(2+) serves as cofactor. The cofactor is Ca(2+).

Its subcellular location is the cytoplasm. Probably phosphorylates lipids; the in vivo substrate is unknown. The sequence is that of Probable lipid kinase YegS from Salmonella newport (strain SL254).